The following is a 310-amino-acid chain: tRNA-cytidine(32) 2-sulfurtransferase (310 aa).

A PP-loop motif motif is present at residues 45–50 (SGGKDS). 3 residues coordinate [4Fe-4S] cluster: cysteine 120, cysteine 123, and cysteine 211.

It belongs to the TtcA family. As to quaternary structure, homodimer. The cofactor is Mg(2+). It depends on [4Fe-4S] cluster as a cofactor.

It is found in the cytoplasm. The catalysed reaction is cytidine(32) in tRNA + S-sulfanyl-L-cysteinyl-[cysteine desulfurase] + AH2 + ATP = 2-thiocytidine(32) in tRNA + L-cysteinyl-[cysteine desulfurase] + A + AMP + diphosphate + H(+). Its pathway is tRNA modification. Catalyzes the ATP-dependent 2-thiolation of cytidine in position 32 of tRNA, to form 2-thiocytidine (s(2)C32). The sulfur atoms are provided by the cysteine/cysteine desulfurase (IscS) system. The polypeptide is tRNA-cytidine(32) 2-sulfurtransferase (Shewanella oneidensis (strain ATCC 700550 / JCM 31522 / CIP 106686 / LMG 19005 / NCIMB 14063 / MR-1)).